The following is a 367-amino-acid chain: Auxin efflux carrier component 8 (367 aa).

Residues 1-6 (MISWLD) are Extracellular-facing. The chain crosses the membrane as a helical span at residues 7 to 27 (IYHVVSATVPLYVSMTLGFLS). Residues 28–38 (ARHLKLFSPEQ) are Cytoplasmic-facing. A helical transmembrane segment spans residues 39–59 (CAGINKFVAKFSIPLLSFQII). Ile51 contacts (indol-3-yl)acetate. Topologically, residues 60–69 (SENNPFKMSP) are extracellular. The helical transmembrane segment at 70 to 90 (KLILSDILQKFLVVVVLAMVL) threads the bilayer. At 91–105 (RFWHPTGGRGGKLGW) the chain is on the cytoplasmic side. A helical membrane pass occupies residues 106–126 (VITGLSISVLPNTLILGMPIL). (indol-3-yl)acetate contacts are provided by Asn117 and Leu119. Topologically, residues 127–136 (SAIYGDEAAS) are extracellular. A helical membrane pass occupies residues 137–157 (ILEQIVVLQSLIWYTILLFLF). Tyr150 serves as a coordination point for (indol-3-yl)acetate. The Cytoplasmic segment spans residues 158–227 (ELNAARALPS…LIINPNTYAT (70 aa)). Positions 168–194 (SGASLEHTGNDQEEANIEDEPKEEEDE) are disordered. The span at 178-194 (DQEEANIEDEPKEEEDE) shows a compositional bias: acidic residues. A helical membrane pass occupies residues 228–248 (LIGIIWATLHFRLGWNLPEMI). Residues 249–251 (DKS) are Extracellular-facing. Residues 252-272 (IHLLSDGGLGMAMFSLGLFMA) form a helical membrane-spanning segment. Over 273-288 (SQSSIIACGTKMAIIT) the chain is Cytoplasmic. A helical transmembrane segment spans residues 289–309 (MLLKFVLGPALMIASAYCIRL). The Extracellular segment spans residues 310-312 (KST). Residues 313–333 (LFKVAILQAALPQGVVPFVFA) form a helical membrane-spanning segment. Positions 327 and 328 each coordinate (indol-3-yl)acetate. Residues 334 to 344 (KEYNLHPEIIS) are Cytoplasmic-facing. Residues 345-365 (TGVIFGMLIALPTTLAYYFLL) traverse the membrane as a helical segment. At 366 to 367 (DL) the chain is on the extracellular side.

The protein belongs to the auxin efflux carrier (TC 2.A.69.1) family. In terms of assembly, homodimer. As to expression, expressed in veins of mature leaves. Strongly expressed in pollen.

It localises to the endoplasmic reticulum membrane. It is found in the cell membrane. With respect to regulation, auxin efflux carrier activity is competitively inhibited by naptalamate (N-1-naphthylphthalamic acid, NPA). Acts as a component of the auxin efflux carrier. Component of the intracellular auxin-transport pathway in the male gametophyte. Involved in the regulation of auxin homeostasis in pollen. Involved in the efflux of auxin from the endoplasmic reticulum into the cytoplasm. Binds auxins including indole-3-acetic acid (IAA), naphthaleneacetic acid (NAA) and the herbicide 2,4-dichlorophenoxyacetic acid (2,4-D), but barely indole-3-butyric acid (IBA) and 2-phenylacetic acid (PAA). PIN5 and PIN8 may have an antagonistic/compensatory activity. Involved in the control of vein patterning. Redundantly with PIN6, inhibits the vein-formation-promoting functions of PIN5. PIN5, PIN6, and PIN8 control vein network geometry, but they are expressed in mutually exclusive domains of leaf vascular cells. The sequence is that of Auxin efflux carrier component 8 from Arabidopsis thaliana (Mouse-ear cress).